A 224-amino-acid polypeptide reads, in one-letter code: Glutathione S-transferase Mu 5 (224 aa).

A GST N-terminal domain is found at 4–91 (KSMVLGYWDI…YIARKHNMCG (88 aa)). Position 5 is a phosphoserine (Ser-5). Glutathione contacts are provided by residues 10–11 (YW), 49–53 (WLDVK), 62–63 (NL), and 75–76 (QS). The 119-residue stretch at 93-211 (TEEEKIRVDI…QSDRFFKMPI (119 aa)) folds into the GST C-terminal domain. A substrate-binding site is contributed by Tyr-119.

This sequence belongs to the GST superfamily. Mu family. In terms of assembly, homodimer. Interacts with PFKM isoform 2 and isoform 3 (via N-terminal testis-specific region).

It is found in the cytoplasm. The enzyme catalyses RX + glutathione = an S-substituted glutathione + a halide anion + H(+). Functionally, conjugation of reduced glutathione to a wide number of exogenous and endogenous hydrophobic electrophiles. This chain is Glutathione S-transferase Mu 5 (Gstm5), found in Mus musculus (Mouse).